The primary structure comprises 360 residues: Protein Wnt-2 (360 aa).

Positions 1-25 (MNAPLGGIWPWLPLLLTWLTPEVSS) are cleaved as a signal peptide. Intrachain disulfides connect cysteine 76-cysteine 87, cysteine 127-cysteine 135, cysteine 137-cysteine 157, cysteine 206-cysteine 220, cysteine 208-cysteine 215, cysteine 278-cysteine 309, cysteine 294-cysteine 304, cysteine 308-cysteine 348, cysteine 324-cysteine 339, cysteine 326-cysteine 336, and cysteine 331-cysteine 332. Serine 212 carries the O-palmitoleoyl serine; by PORCN lipid modification. Asparagine 295 is a glycosylation site (N-linked (GlcNAc...) asparagine).

This sequence belongs to the Wnt family. Palmitoleoylation is required for efficient binding to frizzled receptors. Depalmitoleoylation leads to Wnt signaling pathway inhibition.

Its subcellular location is the secreted. It localises to the extracellular space. The protein localises to the extracellular matrix. In terms of biological role, ligand for members of the frizzled family of seven transmembrane receptors. Functions in the canonical Wnt signaling pathway that results in activation of transcription factors of the TCF/LEF family. Functions as a upstream regulator of FGF10 expression. Plays an important role in embryonic lung development. May contribute to embryonic brain development by regulating the proliferation of dopaminergic precursors and neurons. The polypeptide is Protein Wnt-2 (WNT2) (Felis catus (Cat)).